We begin with the raw amino-acid sequence, 90 residues long: Small ribosomal subunit protein uS15c (90 aa).

This sequence belongs to the universal ribosomal protein uS15 family. In terms of assembly, part of the 30S ribosomal subunit.

Its subcellular location is the plastid. It is found in the chloroplast. The sequence is that of Small ribosomal subunit protein uS15c (rps15) from Lotus japonicus (Lotus corniculatus var. japonicus).